Consider the following 186-residue polypeptide: Mitoferrin-2B (186 aa).

The Solcar repeat unit spans residues 75-163; it reads SNVTAHMLAG…FACYEKLKKT (89 aa). The next 3 membrane-spanning stretches (helical) occupy residues 77-96, 137-157, and 172-185; these read VTAH…CLMY, RGLN…FACY, and GNCH…NSCP.

This sequence belongs to the mitochondrial carrier (TC 2.A.29) family.

It is found in the mitochondrion inner membrane. The catalysed reaction is Fe(2+)(in) = Fe(2+)(out). In terms of biological role, mitochondrial iron transporter that mediates iron uptake. Probably required for heme synthesis of hemoproteins and Fe-S cluster assembly in non-erythroid cells. This is Mitoferrin-2B (slc25a28-b) from Xenopus laevis (African clawed frog).